The primary structure comprises 497 residues: UDP-N-acetylmuramoyl-L-alanyl-D-glutamate--2,6-diaminopimelate ligase (497 aa).

Position 29 (S29) interacts with UDP-N-acetyl-alpha-D-muramoyl-L-alanyl-D-glutamate. 116–122 is a binding site for ATP; that stretch reads GTNGKTT. Residues N157, 158-159, S185, Q191, and R193 contribute to the UDP-N-acetyl-alpha-D-muramoyl-L-alanyl-D-glutamate site; that span reads TT. At K225 the chain carries N6-carboxylysine. Residues R392, 416-419, G467, and E471 contribute to the meso-2,6-diaminopimelate site; that span reads DNPR. Residues 416–419 carry the Meso-diaminopimelate recognition motif motif; the sequence is DNPR.

This sequence belongs to the MurCDEF family. MurE subfamily. Requires Mg(2+) as cofactor. Post-translationally, carboxylation is probably crucial for Mg(2+) binding and, consequently, for the gamma-phosphate positioning of ATP.

It localises to the cytoplasm. The catalysed reaction is UDP-N-acetyl-alpha-D-muramoyl-L-alanyl-D-glutamate + meso-2,6-diaminopimelate + ATP = UDP-N-acetyl-alpha-D-muramoyl-L-alanyl-gamma-D-glutamyl-meso-2,6-diaminopimelate + ADP + phosphate + H(+). It functions in the pathway cell wall biogenesis; peptidoglycan biosynthesis. In terms of biological role, catalyzes the addition of meso-diaminopimelic acid to the nucleotide precursor UDP-N-acetylmuramoyl-L-alanyl-D-glutamate (UMAG) in the biosynthesis of bacterial cell-wall peptidoglycan. In Buchnera aphidicola subsp. Acyrthosiphon pisum (strain APS) (Acyrthosiphon pisum symbiotic bacterium), this protein is UDP-N-acetylmuramoyl-L-alanyl-D-glutamate--2,6-diaminopimelate ligase.